We begin with the raw amino-acid sequence, 361 residues long: tRNA-specific 2-thiouridylase MnmA (361 aa).

Residues 11 to 18 (GMSGGVDS) and Met37 each bind ATP. Cys106 acts as the Nucleophile in catalysis. Cys106 and Cys202 form a disulfide bridge. Gly130 serves as a coordination point for ATP. The interaction with tRNA stretch occupies residues 152–154 (KDQ). Cys202 functions as the Cysteine persulfide intermediate in the catalytic mechanism. The interaction with tRNA stretch occupies residues 308–309 (RY).

The protein belongs to the MnmA/TRMU family.

The protein resides in the cytoplasm. The enzyme catalyses S-sulfanyl-L-cysteinyl-[protein] + uridine(34) in tRNA + AH2 + ATP = 2-thiouridine(34) in tRNA + L-cysteinyl-[protein] + A + AMP + diphosphate + H(+). Its function is as follows. Catalyzes the 2-thiolation of uridine at the wobble position (U34) of tRNA, leading to the formation of s(2)U34. This is tRNA-specific 2-thiouridylase MnmA from Clostridium botulinum (strain Eklund 17B / Type B).